A 412-amino-acid chain; its full sequence is CCA-adding enzyme (412 aa).

S41 and K44 together coordinate ATP. Positions 41 and 44 each coordinate CTP. Mg(2+)-binding residues include D53, D55, and D106. ATP contacts are provided by H129, K149, and Y158. CTP contacts are provided by H129, K149, and Y158.

It belongs to the tRNA nucleotidyltransferase/poly(A) polymerase family. Archaeal CCA-adding enzyme subfamily. As to quaternary structure, homodimer. Mg(2+) is required as a cofactor.

It carries out the reaction a tRNA precursor + 2 CTP + ATP = a tRNA with a 3' CCA end + 3 diphosphate. The enzyme catalyses a tRNA with a 3' CCA end + 2 CTP + ATP = a tRNA with a 3' CCACCA end + 3 diphosphate. Its function is as follows. Catalyzes the addition and repair of the essential 3'-terminal CCA sequence in tRNAs without using a nucleic acid template. Adds these three nucleotides in the order of C, C, and A to the tRNA nucleotide-73, using CTP and ATP as substrates and producing inorganic pyrophosphate. tRNA 3'-terminal CCA addition is required both for tRNA processing and repair. Also involved in tRNA surveillance by mediating tandem CCA addition to generate a CCACCA at the 3' terminus of unstable tRNAs. While stable tRNAs receive only 3'-terminal CCA, unstable tRNAs are marked with CCACCA and rapidly degraded. The protein is CCA-adding enzyme of Saccharolobus solfataricus (strain ATCC 35092 / DSM 1617 / JCM 11322 / P2) (Sulfolobus solfataricus).